A 740-amino-acid polypeptide reads, in one-letter code: Eukaryotic translation initiation factor 3 subunit B (740 aa).

The segment covering 1–10 has biased composition (polar residues); the sequence is MAPSFDTLSE. Positions 1 to 20 are disordered; the sequence is MAPSFDTLSEQDLHEEEEEE. The RRM domain occupies 40–126; that stretch reads TFVVIDGLPV…HTLLVNKLMD (87 aa). WD repeat units follow at residues 193–230, 232–289, 302–343, 455–496, 513–556, and 571–609; these read AHWT…KQKQ, PHPF…RSFV, EPKK…LLGK, SLKD…SFFA, IEKK…EKPE, and TEHY…HTFA. The segment at 696-721 is disordered; that stretch reads AYGLPEEADDPKLAKDAAATTQEQGE.

It belongs to the eIF-3 subunit B family. Component of the eukaryotic translation initiation factor 3 (eIF-3) complex.

It localises to the cytoplasm. RNA-binding component of the eukaryotic translation initiation factor 3 (eIF-3) complex, which is involved in protein synthesis of a specialized repertoire of mRNAs and, together with other initiation factors, stimulates binding of mRNA and methionyl-tRNAi to the 40S ribosome. The eIF-3 complex specifically targets and initiates translation of a subset of mRNAs involved in cell proliferation. The protein is Eukaryotic translation initiation factor 3 subunit B (prt1) of Aspergillus fumigatus (strain ATCC MYA-4609 / CBS 101355 / FGSC A1100 / Af293) (Neosartorya fumigata).